The following is a 341-amino-acid chain: Heat-inducible transcription repressor HrcA (341 aa).

The protein belongs to the HrcA family.

Functionally, negative regulator of class I heat shock genes (grpE-dnaK-dnaJ and groELS operons). Prevents heat-shock induction of these operons. The polypeptide is Heat-inducible transcription repressor HrcA (Brevibacillus brevis (strain 47 / JCM 6285 / NBRC 100599)).